Here is a 685-residue protein sequence, read N- to C-terminus: MSAQDFLVELGSEELPPKALKSLATAFLAGIEKGLAAAGLEYRVARFYAAPRRLAVLVEHLVAQQPDRTLNLDGPPVAAAFDAEGNPTQAALGFARKCGVELHEIDSSGAKLRYSRHIPGQPASALLPAIVQASLDELPIPKRMRWGTRKEEFVRPSQWLVMLFGNQVVDCEILAQKAGRESMGHRFHHPDAVRISQPSSYLEDLRSAYVLADFAERRELIAGRVADLAAQQQGSAVVPEDLLDEVTALVEWPVPLVCSFEERFLTVPQEALISTMQDNQKYFCLLDANGKLLPCFITVANIESRDPAQIVAGNEKVVRPRLTDAEFFFNQDKRQPLESFNQRLASVVFQAQLGSVLEKAERVSRLAGFIAERIGGDPQHAIRAGLLSKADLASEMVGEFPELQGIAGYHYALNAGEPEDIARALDEQYMPRGAGAQLPSTLTGAAVAMADKLDTLVGIFGIGMPPTGSKDPYALRRAALGILRILIEKQLDLNLEEASHFAVAQYGTKVKASGLAEQVSEFVFDRLRARYEDEGIDVSSYLAVRALQPASAYDLDLRVQAVQAFRRLPEAEALAAVNKRVSNLLGKYEGKLPAAIEARYFDNASEFSLYSALQQAQHAVRPLAAERRYREALERLASLRDPVDAYFEAVLVNAEDPAIRANRHAMLAQLRGLFLCVADISVLGQ.

Belongs to the class-II aminoacyl-tRNA synthetase family. In terms of assembly, tetramer of two alpha and two beta subunits.

It is found in the cytoplasm. It carries out the reaction tRNA(Gly) + glycine + ATP = glycyl-tRNA(Gly) + AMP + diphosphate. The chain is Glycine--tRNA ligase beta subunit from Azotobacter vinelandii (strain DJ / ATCC BAA-1303).